The following is a 98-amino-acid chain: DNA-binding protein Fis (98 aa).

Residues 74 to 93 (QTRAALMMGINRGTLRKKLK) constitute a DNA-binding region (H-T-H motif).

The protein belongs to the transcriptional regulatory Fis family. Homodimer.

Functionally, activates ribosomal RNA transcription. Plays a direct role in upstream activation of rRNA promoters. The sequence is that of DNA-binding protein Fis from Citrobacter koseri (strain ATCC BAA-895 / CDC 4225-83 / SGSC4696).